Reading from the N-terminus, the 207-residue chain is Guanylate kinase (207 aa).

Positions 4 to 184 constitute a Guanylate kinase-like domain; it reads GTLYIVSAPS…ALSDLKTIIR (181 aa). Residue 11-18 participates in ATP binding; it reads APSGAGKS.

The protein belongs to the guanylate kinase family.

It localises to the cytoplasm. It carries out the reaction GMP + ATP = GDP + ADP. Essential for recycling GMP and indirectly, cGMP. This is Guanylate kinase from Salmonella paratyphi A (strain ATCC 9150 / SARB42).